The following is a 392-amino-acid chain: Formate-dependent phosphoribosylglycinamide formyltransferase (392 aa).

N(1)-(5-phospho-beta-D-ribosyl)glycinamide-binding positions include 15-16 (EL) and E75. ATP is bound by residues R107, K148, 153–158 (SSGKGQ), 188–191 (EEFL), and E196. The 191-residue stretch at 112–302 (DLASEELALL…EFELHLRAVL (191 aa)) folds into the ATP-grasp domain. Positions 261 and 273 each coordinate Mg(2+). N(1)-(5-phospho-beta-D-ribosyl)glycinamide is bound by residues D280, K350, and 357–358 (RR).

This sequence belongs to the PurK/PurT family. In terms of assembly, homodimer.

The catalysed reaction is N(1)-(5-phospho-beta-D-ribosyl)glycinamide + formate + ATP = N(2)-formyl-N(1)-(5-phospho-beta-D-ribosyl)glycinamide + ADP + phosphate + H(+). It participates in purine metabolism; IMP biosynthesis via de novo pathway; N(2)-formyl-N(1)-(5-phospho-D-ribosyl)glycinamide from N(1)-(5-phospho-D-ribosyl)glycinamide (formate route): step 1/1. Functionally, involved in the de novo purine biosynthesis. Catalyzes the transfer of formate to 5-phospho-ribosyl-glycinamide (GAR), producing 5-phospho-ribosyl-N-formylglycinamide (FGAR). Formate is provided by PurU via hydrolysis of 10-formyl-tetrahydrofolate. In Prochlorococcus marinus (strain MIT 9303), this protein is Formate-dependent phosphoribosylglycinamide formyltransferase.